Reading from the N-terminus, the 688-residue chain is Glycine--tRNA ligase beta subunit (688 aa).

It belongs to the class-II aminoacyl-tRNA synthetase family. Tetramer of two alpha and two beta subunits.

The protein localises to the cytoplasm. It carries out the reaction tRNA(Gly) + glycine + ATP = glycyl-tRNA(Gly) + AMP + diphosphate. This Histophilus somni (strain 129Pt) (Haemophilus somnus) protein is Glycine--tRNA ligase beta subunit.